Consider the following 237-residue polypeptide: MOB kinase activator 2 (237 aa).

The segment at 1 to 21 (MDWLMGKSKAKPNGKKPAAEE) is disordered. Positions 78, 83, 157, and 162 each coordinate Zn(2+). A compositionally biased stretch (gly residues) spans 217–229 (GGSGDGAGSGGPG). A disordered region spans residues 217 to 237 (GGSGDGAGSGGPGAQNHVKER).

The protein belongs to the MOB1/phocein family. As to quaternary structure, binds STK38 and STK38L. Phosphorylated.

The protein resides in the nucleus. Its subcellular location is the cytoplasm. The protein localises to the perinuclear region. Stimulates the autophosphorylation and kinase activity of STK38 and STK38L. This is MOB kinase activator 2 (MOB2) from Homo sapiens (Human).